Here is a 44-residue protein sequence, read N- to C-terminus: uncharacterized protein (44 aa).

A signal peptide spans 1-28 (MLRDLGRRVAIAAILSGIILGGMSISLA).

This is an uncharacterized protein from Bacillus subtilis (strain 168).